The sequence spans 87 residues: Putative defensin-like protein 235 (87 aa).

The signal sequence occupies residues 1 to 26 (MRSATFFLVSCVLMSFVLSHVKEVEA). Intrachain disulfides connect cysteine 46/cysteine 73, cysteine 54/cysteine 82, and cysteine 71/cysteine 84.

Belongs to the DEFL family.

The protein localises to the secreted. The polypeptide is Putative defensin-like protein 235 (SCRL26) (Arabidopsis thaliana (Mouse-ear cress)).